Consider the following 79-residue polypeptide: D-alanyl carrier protein (79 aa).

The region spanning 1–77 (MDTKQAVLDI…KIIAKVESLR (77 aa)) is the Carrier domain. Ser35 is modified (O-(pantetheine 4'-phosphoryl)serine).

This sequence belongs to the DltC family. Post-translationally, 4'-phosphopantetheine is transferred from CoA to a specific serine of apo-DCP.

It is found in the cytoplasm. Its pathway is cell wall biogenesis; lipoteichoic acid biosynthesis. In terms of biological role, carrier protein involved in the D-alanylation of lipoteichoic acid (LTA). The loading of thioester-linked D-alanine onto DltC is catalyzed by D-alanine--D-alanyl carrier protein ligase DltA. The DltC-carried D-alanyl group is further transferred to cell membrane phosphatidylglycerol (PG) by forming an ester bond, probably catalyzed by DltD. D-alanylation of LTA plays an important role in modulating the properties of the cell wall in Gram-positive bacteria, influencing the net charge of the cell wall. This chain is D-alanyl carrier protein, found in Lactobacillus johnsonii (strain CNCM I-12250 / La1 / NCC 533).